Consider the following 139-residue polypeptide: Large ribosomal subunit protein eL34 (139 aa).

The segment at 113–139 (VSKPPKIAKAPAAAAAAKPAKTATKSK) is disordered.

This sequence belongs to the eukaryotic ribosomal protein eL34 family.

The chain is Large ribosomal subunit protein eL34 (RpL34) from Ochlerotatus triseriatus (Eastern treehole mosquito).